Here is a 341-residue protein sequence, read N- to C-terminus: Phosphoribosylformylglycinamidine cyclo-ligase (341 aa).

The protein belongs to the AIR synthase family.

It is found in the cytoplasm. It carries out the reaction 2-formamido-N(1)-(5-O-phospho-beta-D-ribosyl)acetamidine + ATP = 5-amino-1-(5-phospho-beta-D-ribosyl)imidazole + ADP + phosphate + H(+). The protein operates within purine metabolism; IMP biosynthesis via de novo pathway; 5-amino-1-(5-phospho-D-ribosyl)imidazole from N(2)-formyl-N(1)-(5-phospho-D-ribosyl)glycinamide: step 2/2. This is Phosphoribosylformylglycinamidine cyclo-ligase from Xanthomonas campestris pv. campestris (strain 8004).